A 350-amino-acid polypeptide reads, in one-letter code: Quercetin 2,3-dioxygenase (350 aa).

Positions 1 to 145 (DTSSLIVEDA…FYYLGTNATD (145 aa)) are cupin 1. Residues histidine 66, histidine 68, and glutamate 73 each coordinate Cu cation. Histidine 66 contacts substrate. Glutamate 73 contacts substrate. N-linked (GlcNAc...) asparagine glycans are attached at residues asparagine 90 and asparagine 109. Histidine 112 provides a ligand contact to Cu cation. N-linked (GlcNAc...) asparagine glycosylation occurs at asparagine 142. The segment at 146–205 (TTHTPYIPSSSDSSSTTGPDSSTISTLQSFDVYAELSFTPRTDTVNGTAPANTVWHTGAN) is linker. The segment at 148–167 (HTPYIPSSSDSSSTTGPDSS) is disordered. Over residues 152–167 (IPSSSDSSSTTGPDSS) the composition is skewed to low complexity. N-linked (GlcNAc...) asparagine glycosylation is found at asparagine 191 and asparagine 248. The tract at residues 206–350 (ALASTAGDPY…WSSVSFPADW (145 aa)) is cupin 2.

Homodimer. Cu cation is required as a cofactor. In terms of processing, the N-linked glycan at Asn-191 consists of Man(5)-GlcNAc(2).

The enzyme catalyses quercetin + O2 = 2-(3,4-dihydroxybenzoyloxy)-4,6-dihydroxybenzoate + CO. The protein operates within flavonoid metabolism; quercetin degradation. Inhibited by diethyldithiocarbamate and kojic acid. In terms of biological role, performs the first step in the degradation of the flavonoid quercetin by a dioxygenase reaction. The enzyme catalyzes the cleavage of the O-heteroaromatic ring of the flavonol quercetin yielding the depside 2-protocatechuoyl-phloroglucinol carboxylic acid and carbon monoxide. This involves the remarkable dioxygenolytic cleavage of two carbon-carbon bonds. This chain is Quercetin 2,3-dioxygenase, found in Aspergillus japonicus.